A 208-amino-acid polypeptide reads, in one-letter code: Ribosomal RNA large subunit methyltransferase E (208 aa).

The S-adenosyl-L-methionine site is built by Gly-62, Trp-64, Asp-82, Asp-98, and Asp-123. The active-site Proton acceptor is the Lys-163.

It belongs to the class I-like SAM-binding methyltransferase superfamily. RNA methyltransferase RlmE family.

The protein resides in the cytoplasm. The catalysed reaction is uridine(2552) in 23S rRNA + S-adenosyl-L-methionine = 2'-O-methyluridine(2552) in 23S rRNA + S-adenosyl-L-homocysteine + H(+). Its function is as follows. Specifically methylates the uridine in position 2552 of 23S rRNA at the 2'-O position of the ribose in the fully assembled 50S ribosomal subunit. The protein is Ribosomal RNA large subunit methyltransferase E of Idiomarina loihiensis (strain ATCC BAA-735 / DSM 15497 / L2-TR).